Here is a 414-residue protein sequence, read N- to C-terminus: NAC domain-containing protein 35 (414 aa).

Positions Met-1–Glu-21 are enriched in polar residues. The tract at residues Met-1–Asp-47 is disordered. Positions Lys-22–Asp-47 are enriched in basic and acidic residues. Positions Val-51–Arg-198 constitute an NAC domain. The DNA-binding element occupies Ile-149–His-204. Residues Gly-200–Ile-251 are disordered. Residues His-233–Ile-251 show a composition bias toward low complexity.

Expressed in aerial organs in early stages of seedling development.

The protein resides in the nucleus. In terms of biological role, transcription factor that acts as a floral repressor. Controls flowering time by negatively regulating CONSTANS (CO) expression in a GIGANTEA (GI)-independent manner. Regulates the plant cold response by positive regulation of the cold response genes COR15A and KIN1. May coordinate cold response and flowering time. This chain is NAC domain-containing protein 35, found in Arabidopsis thaliana (Mouse-ear cress).